The following is a 280-amino-acid chain: Urease accessory protein UreD 1 (280 aa).

Belongs to the UreD family. In terms of assembly, ureD, UreF and UreG form a complex that acts as a GTP-hydrolysis-dependent molecular chaperone, activating the urease apoprotein by helping to assemble the nickel containing metallocenter of UreC. The UreE protein probably delivers the nickel.

It is found in the cytoplasm. Required for maturation of urease via the functional incorporation of the urease nickel metallocenter. This chain is Urease accessory protein UreD 1, found in Brucella melitensis biotype 1 (strain ATCC 23456 / CCUG 17765 / NCTC 10094 / 16M).